The sequence spans 215 residues: Beta-crystallin A3 (215 aa).

The residue at position 1 (Met1) is an N-acetylmethionine. Low complexity predominate over residues 1–16 (METQAEQQELETLPTT). A disordered region spans residues 1 to 29 (METQAEQQELETLPTTKMAQTNPTPGSLG). Positions 1–30 (METQAEQQELETLPTTKMAQTNPTPGSLGP) are N-terminal arm. Glu2 carries the N-acetylalanine modification. Beta/gamma crystallin 'Greek key' domains are found at residues 31 to 70 (WKITIYDQENFQGKRMEFTSSCPNVSERSFDNVRSLKVES) and 71 to 117 (GAWI…RPIC). 2 positions are modified to S-glutathionyl cysteine; alternate: Cys82 and Cys117. Residues Cys82 and Cys117 each carry the S-methylcysteine; alternate modification. Residues 118-123 (SANHKE) form a connecting peptide region. Beta/gamma crystallin 'Greek key' domains lie at 124 to 165 (SKMT…KIQS) and 166 to 214 (GAWV…RRIQ). Cys185 is modified (S-methylcysteine).

It belongs to the beta/gamma-crystallin family. In terms of assembly, homo/heterodimer, or complexes of higher-order. The structure of beta-crystallin oligomers seems to be stabilized through interactions between the N-terminal arms. Interacts with CRYBA1. Specific cleavages in the N-terminal arm occur during lens maturation and give rise to several truncated forms. Cleavages do not seem to have adverse effects on solubility. Post-translationally, S-methylation and glutathionylation occur in normal young lenses and do not seem to be detrimental.

Crystallins are the dominant structural components of the vertebrate eye lens. In Homo sapiens (Human), this protein is Beta-crystallin A3.